The primary structure comprises 360 residues: Peptide chain release factor 1 (360 aa).

Gln-235 is modified (N5-methylglutamine). Residues 284-293 (HKRQQEEAST) are compositionally biased toward basic and acidic residues. The tract at residues 284–305 (HKRQQEEASTRRNLLGSGDRSD) is disordered.

Belongs to the prokaryotic/mitochondrial release factor family. In terms of processing, methylated by PrmC. Methylation increases the termination efficiency of RF1.

It is found in the cytoplasm. Functionally, peptide chain release factor 1 directs the termination of translation in response to the peptide chain termination codons UAG and UAA. This chain is Peptide chain release factor 1, found in Pectobacterium atrosepticum (strain SCRI 1043 / ATCC BAA-672) (Erwinia carotovora subsp. atroseptica).